The following is a 61-amino-acid chain: Large ribosomal subunit protein uL30 (61 aa).

Belongs to the universal ribosomal protein uL30 family. Part of the 50S ribosomal subunit.

In Lactobacillus delbrueckii subsp. bulgaricus (strain ATCC 11842 / DSM 20081 / BCRC 10696 / JCM 1002 / NBRC 13953 / NCIMB 11778 / NCTC 12712 / WDCM 00102 / Lb 14), this protein is Large ribosomal subunit protein uL30.